An 85-amino-acid chain; its full sequence is Large ribosomal subunit protein bL27 (85 aa).

The tract at residues 1–20 (MAHKKAAGSSRNGRDSNPKM) is disordered.

It belongs to the bacterial ribosomal protein bL27 family.

The protein is Large ribosomal subunit protein bL27 of Psychrobacter arcticus (strain DSM 17307 / VKM B-2377 / 273-4).